Reading from the N-terminus, the 320-residue chain is MPQPMSPPAIFLMGPTASGKTDLAVELVRRLPCEIISVDSALVYRGMDIGTAKPGPEILAEAPHRLIDILDPAEAYSAARFREDALAAMAEIAAAGRVPLLVGGTMLYFRALEFGLDRLPEADPEVRAQIEAEAAASGWEAIHARLAAVDPPSAARIHPNDPQRLQRALEVYLLTGRPLSAFHGGADASTLPYRLLRLALIPADRAALRERIARRFDQMLELGLIHEVETLYRREDLNPSLPAIRAVGYRQAWAYLAGEMDFETMRSKAIIATGQLAKRQLTWLRSYPGIEVLEMEQLDPAAVVARVRAHLEAARAGAGP.

Residue 14 to 21 participates in ATP binding; it reads GPTASGKT. Residue 16–21 participates in substrate binding; sequence TASGKT. Interaction with substrate tRNA regions lie at residues 39–42 and 163–167; these read DSAL and QRLQR.

This sequence belongs to the IPP transferase family. As to quaternary structure, monomer. Mg(2+) serves as cofactor.

The catalysed reaction is adenosine(37) in tRNA + dimethylallyl diphosphate = N(6)-dimethylallyladenosine(37) in tRNA + diphosphate. Functionally, catalyzes the transfer of a dimethylallyl group onto the adenine at position 37 in tRNAs that read codons beginning with uridine, leading to the formation of N6-(dimethylallyl)adenosine (i(6)A). The chain is tRNA dimethylallyltransferase from Thioalkalivibrio sulfidiphilus (strain HL-EbGR7).